The primary structure comprises 141 residues: Histone H2B (141 aa).

Over residues 1 to 10 (MPPKAAEKKP) the composition is skewed to basic and acidic residues. The interval 1-49 (MPPKAAEKKPSTGGKAPAGGKAPAEKKEAGKKTAAAASGDKKKRGKTRK) is disordered. Lys8 and Lys9 each carry N6-acetyllysine; alternate. Glycyl lysine isopeptide (Lys-Gly) (interchain with G-Cter in SUMO); alternate cross-links involve residues Lys8 and Lys9. Over residues 11-22 (STGGKAPAGGKA) the composition is skewed to low complexity. Lys15 carries the N6-acetyllysine modification. Lys26 bears the N6-acetyllysine; alternate mark. Lys26 participates in a covalent cross-link: Glycyl lysine isopeptide (Lys-Gly) (interchain with G-Cter in SUMO); alternate. A Glycyl lysine isopeptide (Lys-Gly) (interchain with G-Cter in SUMO) cross-link involves residue Lys27. Lys135 participates in a covalent cross-link: Glycyl lysine isopeptide (Lys-Gly) (interchain with G-Cter in ubiquitin).

It belongs to the histone H2B family. In terms of assembly, the nucleosome is a histone octamer containing two molecules each of H2A, H2B, H3 and H4 assembled in one H3-H4 heterotetramer and two H2A-H2B heterodimers. The octamer wraps approximately 147 bp of DNA. Monoubiquitinated by the ubc2-bre1 complex to form H2BK123ub1. H2BK123ub1 gives a specific tag for epigenetic transcriptional activation and is also prerequisite for H3K4me and H3K79me formation. H2BK123ub1 also modulates the formation of double-strand breaks during meiosis and is a prerequisite for DNA-damage checkpoint activation. In terms of processing, acetylated by gcn5 to form H2BK11ac and H2BK16ac. H2BK16ac can also be formed by esa1. Acetylation of N-terminal lysines and particularly formation of H2BK11acK16ac has a positive effect on transcription. Post-translationally, sumoylation to form H2BK6su or H2BK7su, and probably also H2BK16su or H2BK17su, occurs preferentially near the telomeres and represses gene transcription.

The protein localises to the nucleus. The protein resides in the chromosome. Core component of nucleosome. Nucleosomes wrap and compact DNA into chromatin, limiting DNA accessibility to the cellular machineries which require DNA as a template. Histones thereby play a central role in transcription regulation, DNA repair, DNA replication and chromosomal stability. DNA accessibility is regulated via a complex set of post-translational modifications of histones, also called histone code, and nucleosome remodeling. In Aspergillus niger (strain ATCC MYA-4892 / CBS 513.88 / FGSC A1513), this protein is Histone H2B (htb1).